The following is a 409-amino-acid chain: Putative competence-damage inducible protein (409 aa).

It belongs to the CinA family.

The chain is Putative competence-damage inducible protein from Clostridium tetani (strain Massachusetts / E88).